The sequence spans 96 residues: Phosphoribosyl-ATP pyrophosphatase (96 aa).

The protein belongs to the PRA-PH family.

It is found in the cytoplasm. It carries out the reaction 1-(5-phospho-beta-D-ribosyl)-ATP + H2O = 1-(5-phospho-beta-D-ribosyl)-5'-AMP + diphosphate + H(+). The protein operates within amino-acid biosynthesis; L-histidine biosynthesis; L-histidine from 5-phospho-alpha-D-ribose 1-diphosphate: step 2/9. In Methanococcus maripaludis (strain C5 / ATCC BAA-1333), this protein is Phosphoribosyl-ATP pyrophosphatase.